A 303-amino-acid chain; its full sequence is Oxygen-dependent coproporphyrinogen-III oxidase (303 aa).

Serine 93 is a binding site for substrate. A divalent metal cation is bound by residues histidine 97 and histidine 107. Histidine 107 serves as the catalytic Proton donor. A substrate-binding site is contributed by 109–111 (NVR). 2 residues coordinate a divalent metal cation: histidine 146 and histidine 176. The interval 241 to 276 (YVEFNLVYDRGTLFGLQSGGRTESILMSLPPQVRWG) is important for dimerization. 259-261 (GGR) is a substrate binding site.

This sequence belongs to the aerobic coproporphyrinogen-III oxidase family. In terms of assembly, homodimer. A divalent metal cation serves as cofactor.

It is found in the cytoplasm. It catalyses the reaction coproporphyrinogen III + O2 + 2 H(+) = protoporphyrinogen IX + 2 CO2 + 2 H2O. It functions in the pathway porphyrin-containing compound metabolism; protoporphyrin-IX biosynthesis; protoporphyrinogen-IX from coproporphyrinogen-III (O2 route): step 1/1. Functionally, involved in the heme biosynthesis. Catalyzes the aerobic oxidative decarboxylation of propionate groups of rings A and B of coproporphyrinogen-III to yield the vinyl groups in protoporphyrinogen-IX. This is Oxygen-dependent coproporphyrinogen-III oxidase from Pseudomonas putida (strain GB-1).